The sequence spans 774 residues: Ion-translocating oxidoreductase complex subunit C (774 aa).

4Fe-4S ferredoxin-type domains lie at 369 to 397 (GEPQ…QQLY) and 407 to 436 (KATT…VQYF). 8 residues coordinate [4Fe-4S] cluster: Cys377, Cys380, Cys383, Cys387, Cys416, Cys419, Cys422, and Cys426. A disordered region spans residues 602 to 750 (KLEQQQANAE…EPEEQIDPRK (149 aa)).

The protein belongs to the 4Fe4S bacterial-type ferredoxin family. RnfC subfamily. In terms of assembly, the complex is composed of six subunits: RsxA, RsxB, RsxC, RsxD, RsxE and RsxG. Requires [4Fe-4S] cluster as cofactor.

Its subcellular location is the cell inner membrane. Its function is as follows. Part of a membrane-bound complex that couples electron transfer with translocation of ions across the membrane. Required to maintain the reduced state of SoxR. This Escherichia coli O6:K15:H31 (strain 536 / UPEC) protein is Ion-translocating oxidoreductase complex subunit C.